The following is a 140-amino-acid chain: Large ribosomal subunit protein uL13 (140 aa).

As to quaternary structure, part of the 50S ribosomal subunit.

In terms of biological role, this protein is one of the early assembly proteins of the 50S ribosomal subunit, although it is not seen to bind rRNA by itself. It is important during the early stages of 50S assembly. This chain is Large ribosomal subunit protein uL13, found in Thermus thermophilus (strain ATCC 27634 / DSM 579 / HB8).